The primary structure comprises 347 residues: MQSGKMKALMKKDGAFGAVLTEVPIPEIDKHEVLIKVKAASICGTDVHIYNWDQWARQRIKTPYVFGHEFSGIVEGVGENVSSVKVGEYVSAETHIVCGECVPCLTGKSHVCTNTAIIGVDTAGCFAEYVKVPADNIWRNPADMDPSIASIQEPLGNAVHTVLESQPAGGTTAVIGCGPIGLMAVAVAKAAGASQVIAIDKNEYRLRLAKQMGATCTVSIEKEDPLKIVSALTSGEGADLVCEMSGHPSAIAQGLAMAANGGRFHILSLPEHPVTIDLTNKVVFKGLTIQGITGRKMFSTWRQVSQLISSNMIDLAPVITHQFPLEEFEKGFELMRSGQCGKVILIP.

Cys-43 provides a ligand contact to Zn(2+). Catalysis depends on charge relay system residues Thr-45 and His-48. Residues His-68, Glu-69, Cys-98, Cys-101, Cys-104, and Cys-112 each coordinate Zn(2+). Residues Ile-180, Asp-200, Arg-205, 267-269 (LSL), and 292-293 (IT) contribute to the NAD(+) site.

It belongs to the zinc-containing alcohol dehydrogenase family. Homotetramer. Requires Zn(2+) as cofactor.

The protein localises to the cytoplasm. The enzyme catalyses L-threonine + NAD(+) = (2S)-2-amino-3-oxobutanoate + NADH + H(+). Its pathway is amino-acid degradation; L-threonine degradation via oxydo-reductase pathway; glycine from L-threonine: step 1/2. Functionally, catalyzes the NAD(+)-dependent oxidation of L-threonine to 2-amino-3-ketobutyrate. The sequence is that of L-threonine 3-dehydrogenase from Bacillus subtilis (strain 168).